The primary structure comprises 218 residues: Thiopurine S-methyltransferase (218 aa).

The S-adenosyl-L-methionine site is built by Trp-10, Leu-45, Glu-66, and Arg-123.

It belongs to the class I-like SAM-binding methyltransferase superfamily. TPMT family.

It localises to the cytoplasm. It carries out the reaction S-adenosyl-L-methionine + a thiopurine = S-adenosyl-L-homocysteine + a thiopurine S-methylether.. The protein is Thiopurine S-methyltransferase of Shewanella baltica (strain OS155 / ATCC BAA-1091).